Consider the following 87-residue polypeptide: UPF0335 protein Avi_3695 (87 aa).

This sequence belongs to the UPF0335 family.

The sequence is that of UPF0335 protein Avi_3695 from Allorhizobium ampelinum (strain ATCC BAA-846 / DSM 112012 / S4) (Agrobacterium vitis (strain S4)).